A 79-amino-acid chain; its full sequence is SALFLAMHYTPDTITAFSSVTHICRDVNYGWLIRYIHANGASLFFICLYLHIGRGIYYGSYSYMETWNIGIILLILTMA.

The next 3 membrane-spanning stretches (helical) occupy residues 1–7 (SALFLAM), 31–52 (WLIR…YLHI), and 67–79 (WNIG…LTMA). Heme b-binding residues include H37 and H51.

This sequence belongs to the cytochrome b family. In terms of assembly, the cytochrome bc1 complex contains 11 subunits: 3 respiratory subunits (MT-CYB, CYC1 and UQCRFS1), 2 core proteins (UQCRC1 and UQCRC2) and 6 low-molecular weight proteins (UQCRH/QCR6, UQCRB/QCR7, UQCRQ/QCR8, UQCR10/QCR9, UQCR11/QCR10 and a cleavage product of UQCRFS1). This cytochrome bc1 complex then forms a dimer. Requires heme b as cofactor.

The protein resides in the mitochondrion inner membrane. Its function is as follows. Component of the ubiquinol-cytochrome c reductase complex (complex III or cytochrome b-c1 complex) that is part of the mitochondrial respiratory chain. The b-c1 complex mediates electron transfer from ubiquinol to cytochrome c. Contributes to the generation of a proton gradient across the mitochondrial membrane that is then used for ATP synthesis. This is Cytochrome b (MT-CYB) from Dipodomys heermanni (Heermann's kangaroo rat).